The sequence spans 26 residues: THSGGACNSHDQCCNAFCSTATRTCV.

Intrachain disulfides connect cysteine 7–cysteine 18 and cysteine 13–cysteine 25.

It belongs to the conotoxin O1 superfamily. In terms of tissue distribution, expressed by the venom duct.

The protein resides in the secreted. The chain is Conotoxin Eb6.17 (E1) from Conus ebraeus (Hebrew cone).